Reading from the N-terminus, the 518-residue chain is Bifunctional purine biosynthesis protein PurH (518 aa).

The region spanning 1–144 is the MGS-like domain; the sequence is MSKRALISVS…KNHASVTVVC (144 aa).

Belongs to the PurH family.

The enzyme catalyses (6R)-10-formyltetrahydrofolate + 5-amino-1-(5-phospho-beta-D-ribosyl)imidazole-4-carboxamide = 5-formamido-1-(5-phospho-D-ribosyl)imidazole-4-carboxamide + (6S)-5,6,7,8-tetrahydrofolate. It carries out the reaction IMP + H2O = 5-formamido-1-(5-phospho-D-ribosyl)imidazole-4-carboxamide. The protein operates within purine metabolism; IMP biosynthesis via de novo pathway; 5-formamido-1-(5-phospho-D-ribosyl)imidazole-4-carboxamide from 5-amino-1-(5-phospho-D-ribosyl)imidazole-4-carboxamide (10-formyl THF route): step 1/1. Its pathway is purine metabolism; IMP biosynthesis via de novo pathway; IMP from 5-formamido-1-(5-phospho-D-ribosyl)imidazole-4-carboxamide: step 1/1. In Lactococcus lactis subsp. lactis (strain IL1403) (Streptococcus lactis), this protein is Bifunctional purine biosynthesis protein PurH.